We begin with the raw amino-acid sequence, 278 residues long: Large ribosomal subunit protein uL2 (278 aa).

Residues 222 to 264 (GVAMNPIDHPHGGGEGRTSGGRHPVTPWGKPTKGRKTRKNKAT) form a disordered region.

This sequence belongs to the universal ribosomal protein uL2 family. As to quaternary structure, part of the 50S ribosomal subunit. Forms a bridge to the 30S subunit in the 70S ribosome.

Functionally, one of the primary rRNA binding proteins. Required for association of the 30S and 50S subunits to form the 70S ribosome, for tRNA binding and peptide bond formation. It has been suggested to have peptidyltransferase activity; this is somewhat controversial. Makes several contacts with the 16S rRNA in the 70S ribosome. The chain is Large ribosomal subunit protein uL2 from Phenylobacterium zucineum (strain HLK1).